A 238-amino-acid chain; its full sequence is Pyridoxine 5'-phosphate synthase (238 aa).

Asn7 provides a ligand contact to 3-amino-2-oxopropyl phosphate. 9–10 (DH) is a binding site for 1-deoxy-D-xylulose 5-phosphate. 3-amino-2-oxopropyl phosphate is bound at residue Arg18. Catalysis depends on His43, which acts as the Proton acceptor. Positions 45 and 50 each coordinate 1-deoxy-D-xylulose 5-phosphate. Glu70 serves as the catalytic Proton acceptor. Thr100 lines the 1-deoxy-D-xylulose 5-phosphate pocket. His190 functions as the Proton donor in the catalytic mechanism. 3-amino-2-oxopropyl phosphate-binding positions include Gly191 and 212–213 (GH).

This sequence belongs to the PNP synthase family. Homooctamer; tetramer of dimers.

The protein resides in the cytoplasm. It carries out the reaction 3-amino-2-oxopropyl phosphate + 1-deoxy-D-xylulose 5-phosphate = pyridoxine 5'-phosphate + phosphate + 2 H2O + H(+). It functions in the pathway cofactor biosynthesis; pyridoxine 5'-phosphate biosynthesis; pyridoxine 5'-phosphate from D-erythrose 4-phosphate: step 5/5. In terms of biological role, catalyzes the complicated ring closure reaction between the two acyclic compounds 1-deoxy-D-xylulose-5-phosphate (DXP) and 3-amino-2-oxopropyl phosphate (1-amino-acetone-3-phosphate or AAP) to form pyridoxine 5'-phosphate (PNP) and inorganic phosphate. This Prochlorococcus marinus (strain MIT 9515) protein is Pyridoxine 5'-phosphate synthase.